A 1084-amino-acid polypeptide reads, in one-letter code: Autophagy-related protein 11 (1084 aa).

Coiled coils occupy residues 585 to 739 (VQNL…LTES) and 847 to 879 (VIRRFNDIESLAKKLRKENKNKKILLQKYTNDK). 2 disordered regions span residues 925-961 (SMIPPRVIPNRVEPASNTNNSNPSSVPEDMGSPNMNR) and 973-1007 (NIGSNNSNNNYVNTGNANGNNKPETNIDTTSSTNA). Low complexity-rich tracts occupy residues 940–949 (SNTNNSNPSS) and 973–993 (NIGSNNSNNNYVNTGNANGNN). Positions 994 to 1007 (KPETNIDTTSSTNA) are enriched in polar residues.

Belongs to the ATG11 family. Homodimer and potential homooligomers. Interacts with ATG1 kinase and the ATG19 and ATG34 cargo protein transporters. Interacts with ATG9, ATG17 and ATG20.

It localises to the preautophagosomal structure membrane. The protein localises to the vacuole membrane. Involved in cytoplasm to vacuole transport (Cvt), pexophagy, mitophagy and nucleophagy. Recruits mitochondria for their selective degradation via autophagy (mitophagy) during starvation, through its interaction with ATG32. Works as scaffold proteins that recruit ATG proteins to the pre-autophagosome (PAS), the site of vesicle/autophagosome formation. Required for ATG9 anterograde transport from the mitochondria to the PAS. Also recruits the ATG19-prAPE1 complex to the PAS. Required for the Cvt vesicles completion. The chain is Autophagy-related protein 11 from Kluyveromyces marxianus (strain DMKU3-1042 / BCC 29191 / NBRC 104275) (Yeast).